Reading from the N-terminus, the 363-residue chain is Peptide chain release factor 2 (363 aa).

Glutamine 251 carries the N5-methylglutamine modification.

It belongs to the prokaryotic/mitochondrial release factor family. Post-translationally, methylated by PrmC. Methylation increases the termination efficiency of RF2.

It is found in the cytoplasm. Functionally, peptide chain release factor 2 directs the termination of translation in response to the peptide chain termination codons UGA and UAA. In Helicobacter pylori (strain Shi470), this protein is Peptide chain release factor 2.